The sequence spans 1943 residues: Protocadherin-15 (1943 aa).

The N-terminal stretch at Met-1 to Gly-26 is a signal peptide. Residues Gln-27–Ala-1381 are Extracellular-facing. Cys-37 and Cys-125 are joined by a disulfide. 11 consecutive Cadherin domains span residues Pro-45–Phe-152, Lys-153–Phe-270, Arg-283–Phe-400, Thr-401–Phe-514, Pro-515–Phe-621, Pro-622–Phe-722, Pro-724–Phe-824, Thr-825–Phe-931, Ser-932–Phe-1040, Gln-1042–Phe-1149, and Gln-1150–Leu-1264. N-linked (GlcNAc...) asparagine glycans are attached at residues Asn-57, Asn-102, and Asn-206. N-linked (GlcNAc...) asparagine glycosylation is found at Asn-424, Asn-564, Asn-667, Asn-729, Asn-773, Asn-826, and Asn-856. N-linked (GlcNAc...) asparagine glycans are attached at residues Asn-1069, Asn-1089, and Asn-1180. Residues Leu-1382–Val-1402 traverse the membrane as a helical segment. At Ser-1403–Leu-1943 the chain is on the cytoplasmic side. Disordered regions lie at residues Pro-1425–Tyr-1453, Gly-1475–Asn-1533, and Ile-1714–Arg-1865. Positions Ala-1431 to Gly-1449 are enriched in pro residues. Basic and acidic residues-rich tracts occupy residues Pro-1480–Gly-1489 and Glu-1498–Leu-1509. Composition is skewed to pro residues over residues Pro-1742–Pro-1760 and Pro-1769–Gln-1779. Low complexity predominate over residues Ser-1784–Leu-1795. The segment covering Pro-1796 to Thr-1821 has biased composition (pro residues). Residues Ser-1822–Ala-1834 show a composition bias toward low complexity. A compositionally biased stretch (polar residues) spans Thr-1846 to Gln-1858.

As to quaternary structure, antiparallel heterodimer with CDH23. Found in a complex with TMIE and LHFPL5. Interacts with LHFPL5/TMHS; this interaction is required for efficient localization to hair bundles. Interacts with MYO7A. Interacts with USH1G; this interaction may recruit USH1G to the plasma membrane. Interacts with TOMT. Isoforms CD1 and CD3 interact with TMC1 (via N-terminus) and TMC2 (via N-terminus). Interacts with PIEZO1. Expressed in brain and sensory epithelium of the developing inner ear. Expressed in the retina, in the photoreceptor inner segments, the outer plexiform layer, the inner nuclei layer and the ganglion cell layer and, more diffusely in the inner plexiform layer (at protein level). Not detected in the retinal pigment epithelium (at protein level). Expressed in the spleen, dorsal root ganglion, dorsal aspect of neural tube, floor plate and ependymal cells adjacent to the neural canal.

It is found in the cell membrane. The protein localises to the secreted. Functionally, calcium-dependent cell-adhesion protein. Required for inner ear neuroepithelial cell elaboration and cochlear function. Probably involved in the maintenance of normal retinal function. The sequence is that of Protocadherin-15 (Pcdh15) from Mus musculus (Mouse).